The primary structure comprises 416 residues: UDP-N-acetylglucosamine 1-carboxyvinyltransferase (416 aa).

Phosphoenolpyruvate is bound at residue 22-23 (KN). Arg-91 contributes to the UDP-N-acetyl-alpha-D-glucosamine binding site. Cys-115 acts as the Proton donor in catalysis. Position 115 is a 2-(S-cysteinyl)pyruvic acid O-phosphothioketal (Cys-115). 2 residues coordinate UDP-N-acetyl-alpha-D-glucosamine: Asp-304 and Ile-326.

The protein belongs to the EPSP synthase family. MurA subfamily.

The protein resides in the cytoplasm. It carries out the reaction phosphoenolpyruvate + UDP-N-acetyl-alpha-D-glucosamine = UDP-N-acetyl-3-O-(1-carboxyvinyl)-alpha-D-glucosamine + phosphate. The protein operates within cell wall biogenesis; peptidoglycan biosynthesis. Functionally, cell wall formation. Adds enolpyruvyl to UDP-N-acetylglucosamine. This chain is UDP-N-acetylglucosamine 1-carboxyvinyltransferase, found in Thermodesulfovibrio yellowstonii (strain ATCC 51303 / DSM 11347 / YP87).